A 406-amino-acid chain; its full sequence is 2,3-bisphosphoglycerate-independent phosphoglycerate mutase (406 aa).

It belongs to the BPG-independent phosphoglycerate mutase family. A-PGAM subfamily.

It carries out the reaction (2R)-2-phosphoglycerate = (2R)-3-phosphoglycerate. The protein operates within carbohydrate degradation; glycolysis; pyruvate from D-glyceraldehyde 3-phosphate: step 3/5. Functionally, catalyzes the interconversion of 2-phosphoglycerate and 3-phosphoglycerate. This is 2,3-bisphosphoglycerate-independent phosphoglycerate mutase from Methanococcus maripaludis (strain C7 / ATCC BAA-1331).